A 448-amino-acid chain; its full sequence is Damage-control phosphatase ARMT1 (448 aa).

Mn(2+) contacts are provided by Asp257 and Asn258. 257–258 provides a ligand contact to substrate; the sequence is DN. Glu262 and Asp295 together coordinate S-adenosyl-L-methionine. Asp295 lines the Mn(2+) pocket. Substrate is bound by residues 371-375 and Lys408; that span reads DLNYR. The Subfamily III RTxK motif motif lies at 405-408; it reads RTLK.

This sequence belongs to the damage-control phosphatase family. Sugar phosphate phosphatase III subfamily. The cofactor is Mn(2+). Ni(2+) serves as cofactor. Automethylated.

It catalyses the reaction beta-D-fructose 1-phosphate + H2O = D-fructose + phosphate. The enzyme catalyses beta-D-fructose 6-phosphate = dihydroxyacetone + D-glyceraldehyde 3-phosphate. The catalysed reaction is L-glutamyl-[protein] + S-adenosyl-L-methionine = [protein]-L-glutamate 5-O-methyl ester + S-adenosyl-L-homocysteine. Its function is as follows. Metal-dependent phosphatase that shows phosphatase activity against several substrates, including fructose-1-phosphate and fructose-6-phosphate. Its preference for fructose-1-phosphate, a strong glycating agent that causes DNA damage rather than a canonical yeast metabolite, suggests a damage-control function in hexose phosphate metabolism. Has also been shown to have O-methyltransferase activity that methylates glutamate residues of target proteins to form gamma-glutamyl methyl ester residues. Possibly methylates PCNA, suggesting it is involved in the DNA damage response. In Danio rerio (Zebrafish), this protein is Damage-control phosphatase ARMT1.